The primary structure comprises 362 residues: Ferrochelatase (362 aa).

Fe cation is bound by residues His-212 and Glu-294.

It belongs to the ferrochelatase family.

It localises to the cytoplasm. It catalyses the reaction heme b + 2 H(+) = protoporphyrin IX + Fe(2+). Its pathway is porphyrin-containing compound metabolism; protoheme biosynthesis; protoheme from protoporphyrin-IX: step 1/1. Its function is as follows. Catalyzes the ferrous insertion into protoporphyrin IX. The chain is Ferrochelatase from Leptospira biflexa.